The chain runs to 168 residues: Protein-export protein SecB (168 aa).

Residues 1 to 21 (MADQPSGNNDAKQAETNGNTV) form a disordered region.

The protein belongs to the SecB family. As to quaternary structure, homotetramer, a dimer of dimers. One homotetramer interacts with 1 SecA dimer.

It is found in the cytoplasm. Functionally, one of the proteins required for the normal export of preproteins out of the cell cytoplasm. It is a molecular chaperone that binds to a subset of precursor proteins, maintaining them in a translocation-competent state. It also specifically binds to its receptor SecA. The chain is Protein-export protein SecB from Chelativorans sp. (strain BNC1).